Reading from the N-terminus, the 1547-residue chain is Fatty acid synthase subunit alpha (1547 aa).

The disordered stretch occupies residues 94–121 (TLPEAHPPPPIDSHQEPSTQTQATHRSA). The span at 109 to 118 (EPSTQTQATH) shows a compositional bias: polar residues. The Carrier domain occupies 145–221 (LPVSTIVRSL…ETMSIGHNGR (77 aa)). Ser-180 bears the O-(pantetheine 4'-phosphoryl)serine mark. Residues 563–798 (GKNVLITGAG…ATLMGGTITT (236 aa)) are ketoreductase (KR) domain. Positions 1004-1476 (KESLQEIVLQ…QKGSQAILIH (473 aa)) constitute a Ketosynthase family 3 (KS3) domain. Catalysis depends on for beta-ketoacyl synthase activity residues Cys-1190 and His-1442.

It belongs to the thiolase-like superfamily. Fungal fatty acid synthetase subunit alpha family. Pantetheine 4'-phosphate is required as a cofactor.

The enzyme catalyses acetyl-CoA + n malonyl-CoA + 2n NADPH + 4n H(+) = a long-chain-acyl-CoA + n CoA + n CO2 + 2n NADP(+).. It catalyses the reaction a fatty acyl-[ACP] + malonyl-[ACP] + H(+) = a 3-oxoacyl-[ACP] + holo-[ACP] + CO2. The catalysed reaction is a (3R)-hydroxyacyl-[ACP] + NADP(+) = a 3-oxoacyl-[ACP] + NADPH + H(+). It functions in the pathway mycotoxin biosynthesis; HC-toxin biosynthesis. Its function is as follows. Fatty acid synthase alpha subunit, part of the diffuse TOX2 gene cluster that mediates the biosynthesis of the HC-toxin, cyclic tetrapeptide of structure cyclo(D-Pro-L-Ala-D-Ala-L-Aeo), where Aeo stands for 2-amino-9,10-epoxi-8-oxodecanoic acid. HC-toxin is a determinant of specificity and virulence in the interaction between the producing fungus and its host, maize. TOXH contribute to the synthesis of the decanoic backbone of 2-amino-9,10-epoxi-8-oxodecanoic acid, an essential precursor for the production of the major forms of HC-toxin by the non-ribosomal peptide synthetase HTS1. The sequence is that of Fatty acid synthase subunit alpha from Cochliobolus carbonum (Maize leaf spot fungus).